Consider the following 249-residue polypeptide: Coproheme decarboxylase (249 aa).

Fe-coproporphyrin III is bound by residues R131, 145-149 (YPMNK), H172, Q185, and S223. Y145 is a catalytic residue.

It belongs to the ChdC family. Type 1 subfamily. The cofactor is Fe-coproporphyrin III.

It carries out the reaction Fe-coproporphyrin III + 2 H2O2 + 2 H(+) = heme b + 2 CO2 + 4 H2O. The enzyme catalyses Fe-coproporphyrin III + H2O2 + H(+) = harderoheme III + CO2 + 2 H2O. The catalysed reaction is harderoheme III + H2O2 + H(+) = heme b + CO2 + 2 H2O. It participates in porphyrin-containing compound metabolism; protoheme biosynthesis. Involved in coproporphyrin-dependent heme b biosynthesis. Catalyzes the decarboxylation of Fe-coproporphyrin III (coproheme) to heme b (protoheme IX), the last step of the pathway. The reaction occurs in a stepwise manner with a three-propionate intermediate. In Thermus thermophilus (strain ATCC BAA-163 / DSM 7039 / HB27), this protein is Coproheme decarboxylase.